The following is a 370-amino-acid chain: Galactose-1-phosphate uridylyltransferase (370 aa).

The Zn(2+) site is built by Cys-51 and Cys-54. Residues Ala-60 and 76–77 (NG) contribute to the UDP-alpha-D-glucose site. His-121 provides a ligand contact to Zn(2+). UDP-alpha-D-glucose is bound at residue Asn-166. Residue His-177 participates in Zn(2+) binding. The active-site Tele-UMP-histidine intermediate is His-179. Gln-181 is a UDP-alpha-D-glucose binding site. Fe cation contacts are provided by Glu-195, His-294, His-311, and His-313. UDP-alpha-D-glucose-binding positions include 326–329 (KFLV) and 331–332 (FE).

The protein belongs to the galactose-1-phosphate uridylyltransferase type 1 family. Homodimer. The cofactor is Zn(2+).

It catalyses the reaction alpha-D-galactose 1-phosphate + UDP-alpha-D-glucose = alpha-D-glucose 1-phosphate + UDP-alpha-D-galactose. It participates in carbohydrate metabolism; galactose metabolism. The protein is Galactose-1-phosphate uridylyltransferase (GAL7) of Kluyveromyces lactis (strain ATCC 8585 / CBS 2359 / DSM 70799 / NBRC 1267 / NRRL Y-1140 / WM37) (Yeast).